The primary structure comprises 128 residues: Large ribosomal subunit protein bL12c (128 aa).

Belongs to the bacterial ribosomal protein bL12 family. Homodimer. Part of the ribosomal stalk of the 50S ribosomal subunit. Forms a multimeric L10(L12)X complex, where L10 forms an elongated spine to which 2 to 4 L12 dimers bind in a sequential fashion. Binds GTP-bound translation factors.

The protein resides in the plastid. Its subcellular location is the chloroplast. Functionally, forms part of the ribosomal stalk which helps the ribosome interact with GTP-bound translation factors. Is thus essential for accurate translation. In Phaeodactylum tricornutum (strain CCAP 1055/1), this protein is Large ribosomal subunit protein bL12c.